The chain runs to 676 residues: ATP-dependent zinc metalloprotease FtsH (676 aa).

Over 1–12 (MSFFDKIFKKFH) the chain is Cytoplasmic. Residues 13-33 (MGVLYFAVILIGATFIYCYFT) form a helical membrane-spanning segment. At 34–115 (KHEKKDNNTF…DPRPWNGYEH (82 aa)) the chain is on the extracellular side. The chain crosses the membrane as a helical span at residues 116 to 136 (VFWVFRQCLTMLFFYCFFLFF). Topologically, residues 137-676 (ADTIKQMGQE…EVLSTDSEQT (540 aa)) are cytoplasmic. 212-219 (GPPGTGKT) serves as a coordination point for ATP. Position 433 (H433) interacts with Zn(2+). Residue E434 is part of the active site. 2 residues coordinate Zn(2+): H437 and D509. The disordered stretch occupies residues 610-676 (EKEETNAPTQ…EVLSTDSEQT (67 aa)). Polar residues predominate over residues 615 to 636 (NAPTQTTSQMSSNNETTNTDKT). Low complexity predominate over residues 650-667 (NQESNESNPNNNEKASPE).

This sequence in the central section; belongs to the AAA ATPase family. The protein in the C-terminal section; belongs to the peptidase M41 family. Homohexamer. The cofactor is Zn(2+).

It is found in the cell membrane. Acts as a processive, ATP-dependent zinc metallopeptidase for both cytoplasmic and membrane proteins. Plays a role in the quality control of integral membrane proteins. The chain is ATP-dependent zinc metalloprotease FtsH from Aster yellows witches'-broom phytoplasma (strain AYWB).